Reading from the N-terminus, the 276-residue chain is Bis(5'-nucleosyl)-tetraphosphatase, symmetrical (276 aa).

It belongs to the Ap4A hydrolase family.

The catalysed reaction is P(1),P(4)-bis(5'-adenosyl) tetraphosphate + H2O = 2 ADP + 2 H(+). Hydrolyzes diadenosine 5',5'''-P1,P4-tetraphosphate to yield ADP. This is Bis(5'-nucleosyl)-tetraphosphatase, symmetrical from Mannheimia succiniciproducens (strain KCTC 0769BP / MBEL55E).